The primary structure comprises 100 residues: Integration host factor subunit alpha (100 aa).

The protein belongs to the bacterial histone-like protein family. Heterodimer of an alpha and a beta chain.

This protein is one of the two subunits of integration host factor, a specific DNA-binding protein that functions in genetic recombination as well as in transcriptional and translational control. Involved in hydrogenase gene expression. The protein is Integration host factor subunit alpha (ihfA) of Rhodobacter capsulatus (Rhodopseudomonas capsulata).